The following is a 558-amino-acid chain: Pyrethroid hydrolase Ces2a (558 aa).

The signal sequence occupies residues 1–26 (MPLARLPGWLCVVACGLLLLLQHVHG). Cys-95 and Cys-122 are oxidised to a cystine. Residue Lys-209 is modified to N6-succinyllysine. The active-site Acyl-ester intermediate is Ser-227. N-linked (GlcNAc...) asparagine glycosylation is present at Asn-275. Cys-279 and Cys-290 are disulfide-bonded. Lys-296 bears the N6-succinyllysine mark. Glu-344 functions as the Charge relay system in the catalytic mechanism. N-linked (GlcNAc...) asparagine glycosylation occurs at Asn-361. The active-site Charge relay system is His-456.

This sequence belongs to the type-B carboxylesterase/lipase family.

The protein localises to the microsome. It carries out the reaction (-)-trans-permethrin + H2O = (3-phenoxyphenyl)methanol + (1S,3R)-3-(2,2-dichlorovinyl)-2,2-dimethylcyclopropanecarboxylate + H(+). It catalyses the reaction all-trans-retinyl hexadecanoate + H2O = all-trans-retinol + hexadecanoate + H(+). In terms of biological role, carboxylesterases that catalyzes the hydrolysis of pyrethroids pesticides. Hydrolyzes permethrin faster than cypermethrin. Hydrolyzes retinyl esters. The sequence is that of Pyrethroid hydrolase Ces2a from Mus musculus (Mouse).